A 517-amino-acid polypeptide reads, in one-letter code: ATP synthase subunit beta (517 aa).

167–174 (GGAGVGKT) contacts ATP. 2 stretches are compositionally biased toward basic and acidic residues: residues 475 to 484 (AESMGAKMDD) and 495 to 508 (DSKD…KADD). The disordered stretch occupies residues 475-517 (AESMGAKMDDGGSDGAPPPSDSKDKGKGDSKADDKGDDADKDA).

Belongs to the ATPase alpha/beta chains family. As to quaternary structure, F-type ATPases have 2 components, CF(1) - the catalytic core - and CF(0) - the membrane proton channel. CF(1) has five subunits: alpha(3), beta(3), gamma(1), delta(1), epsilon(1). CF(0) has three main subunits: a(1), b(2) and c(9-12). The alpha and beta chains form an alternating ring which encloses part of the gamma chain. CF(1) is attached to CF(0) by a central stalk formed by the gamma and epsilon chains, while a peripheral stalk is formed by the delta and b chains.

The protein localises to the cell membrane. The enzyme catalyses ATP + H2O + 4 H(+)(in) = ADP + phosphate + 5 H(+)(out). Functionally, produces ATP from ADP in the presence of a proton gradient across the membrane. The catalytic sites are hosted primarily by the beta subunits. The sequence is that of ATP synthase subunit beta from Mycobacterium sp. (strain JLS).